The primary structure comprises 172 residues: Translationally-controlled tumor protein homolog (172 aa).

The TCTP domain occupies 1–172 (MIIYKDTVTE…FKDGLISEKC (172 aa)).

Belongs to the TCTP family.

It is found in the cytoplasm. Its function is as follows. Involved in calcium binding and microtubule stabilization. The polypeptide is Translationally-controlled tumor protein homolog (tpt1) (Xenopus tropicalis (Western clawed frog)).